A 256-amino-acid chain; its full sequence is 1-(5-phosphoribosyl)-5-[(5-phosphoribosylamino)methylideneamino] imidazole-4-carboxamide isomerase (256 aa).

Catalysis depends on D8, which acts as the Proton acceptor. D130 functions as the Proton donor in the catalytic mechanism.

The protein belongs to the HisA/HisF family.

It localises to the cytoplasm. It catalyses the reaction 1-(5-phospho-beta-D-ribosyl)-5-[(5-phospho-beta-D-ribosylamino)methylideneamino]imidazole-4-carboxamide = 5-[(5-phospho-1-deoxy-D-ribulos-1-ylimino)methylamino]-1-(5-phospho-beta-D-ribosyl)imidazole-4-carboxamide. The protein operates within amino-acid biosynthesis; L-histidine biosynthesis; L-histidine from 5-phospho-alpha-D-ribose 1-diphosphate: step 4/9. This chain is 1-(5-phosphoribosyl)-5-[(5-phosphoribosylamino)methylideneamino] imidazole-4-carboxamide isomerase, found in Pelodictyon phaeoclathratiforme (strain DSM 5477 / BU-1).